The primary structure comprises 315 residues: Acetyl-coenzyme A carboxylase carboxyl transferase subunit alpha (315 aa).

In terms of domain architecture, CoA carboxyltransferase C-terminal spans 40 to 293 (LQDKSKTLTE…RAELSSQLAM (254 aa)).

This sequence belongs to the AccA family. Acetyl-CoA carboxylase is a heterohexamer composed of biotin carboxyl carrier protein (AccB), biotin carboxylase (AccC) and two subunits each of ACCase subunit alpha (AccA) and ACCase subunit beta (AccD).

The protein localises to the cytoplasm. It catalyses the reaction N(6)-carboxybiotinyl-L-lysyl-[protein] + acetyl-CoA = N(6)-biotinyl-L-lysyl-[protein] + malonyl-CoA. Its pathway is lipid metabolism; malonyl-CoA biosynthesis; malonyl-CoA from acetyl-CoA: step 1/1. Functionally, component of the acetyl coenzyme A carboxylase (ACC) complex. First, biotin carboxylase catalyzes the carboxylation of biotin on its carrier protein (BCCP) and then the CO(2) group is transferred by the carboxyltransferase to acetyl-CoA to form malonyl-CoA. This Pseudomonas fluorescens (strain Pf0-1) protein is Acetyl-coenzyme A carboxylase carboxyl transferase subunit alpha.